The following is a 1300-amino-acid chain: Insulin receptor-related protein (1300 aa).

The first 26 residues, 1-26 (MARPKLWPWGILLLVSLLSAGFNLDT), serve as a signal peptide directing secretion. A glycan (N-linked (GlcNAc...) asparagine) is linked at Asn-47. Disulfide bonds link Cys-214/Cys-222, Cys-216/Cys-228, Cys-229/Cys-237, Cys-233/Cys-246, Cys-249/Cys-258, Cys-262/Cys-274, Cys-280/Cys-300, Cys-304/Cys-317, and Cys-320/Cys-324. The N-linked (GlcNAc...) asparagine glycan is linked to Asn-311. N-linked (GlcNAc...) asparagine glycans are attached at residues Asn-411, Asn-492, Asn-528, Asn-616, Asn-634, Asn-756, Asn-885, and Asn-898. 2 consecutive Fibronectin type-III domains span residues 483–603 (QTRT…TLPA) and 607–707 (VPQD…AQEA). Cys-657 and Cys-864 are oxidised to a cystine. The interval 740 to 762 (DAGRHRRAIGSPRPGGNSSDFEI) is disordered. The Extracellular segment spans residues 747 to 921 (AIGSPRPGGN…PEEEDSGGLH (175 aa)). The 95-residue stretch at 818–912 (IPGKLSWEAA…DSVAFYIPGP (95 aa)) folds into the Fibronectin type-III 3 domain. The helical transmembrane segment at 922-943 (ILLTVTPAGLMLLIILAALGFF) threads the bilayer. Over 944 to 1300 (YSRKRNGTLY…CSLQNGGPEH (357 aa)) the chain is Cytoplasmic. The Protein kinase domain maps to 979 to 1254 (ISIIRELGQG…SIQKELRPSF (276 aa)). ATP contacts are provided by residues 985–993 (LGQGSFGMV) and Lys-1013. The active-site Proton acceptor is the Asp-1115. A phosphotyrosine; by autocatalysis mark is found at Tyr-1145 and Tyr-1146. The tract at residues 1270 to 1300 (GLQPTTDAESSSPPTSKGASDCSLQNGGPEH) is disordered. Residues 1272–1300 (QPTTDAESSSPPTSKGASDCSLQNGGPEH) are compositionally biased toward polar residues.

This sequence belongs to the protein kinase superfamily. Tyr protein kinase family. Insulin receptor subfamily. In terms of assembly, probable tetramer of 2 alpha and 2 beta chains linked by disulfide bonds. The alpha chains contribute to the formation of the ligand-binding domain, while the beta chains carry the kinase domain. In terms of processing, autophosphorylated on tyrosine residues between pH 7.9 and pH 10.5.

The protein localises to the membrane. It carries out the reaction L-tyrosyl-[protein] + ATP = O-phospho-L-tyrosyl-[protein] + ADP + H(+). In terms of biological role, receptor with tyrosine-protein kinase activity. Functions as a pH sensing receptor which is activated by increased extracellular pH. Activates an intracellular signaling pathway that involves IRS1 and AKT1/PKB. The protein is Insulin receptor-related protein (INSRR) of Cavia porcellus (Guinea pig).